We begin with the raw amino-acid sequence, 147 residues long: Large ribosomal subunit protein uL15 (147 aa).

Residues 1-15 are compositionally biased toward basic and acidic residues; sequence MKLHELKPAKGAVKE. The tract at residues 1-47 is disordered; it reads MKLHELKPAKGAVKEVKRKGRGRATGNGKTAGRGHNGQNSRSGGGVR. Positions 23–35 are enriched in gly residues; it reads RATGNGKTAGRGH.

The protein belongs to the universal ribosomal protein uL15 family. Part of the 50S ribosomal subunit.

Its function is as follows. Binds to the 23S rRNA. The chain is Large ribosomal subunit protein uL15 from Alkaliphilus metalliredigens (strain QYMF).